The chain runs to 462 residues: Putative ABC transporter A445L (462 aa).

This sequence belongs to the protein kinase superfamily. ADCK protein kinase family.

This is Putative ABC transporter A445L from Chlorella (PBCV-1).